The sequence spans 445 residues: MSDTIFAPATAPGRAAVAVVRVSGPRTQTAVRTLAGDLPEPRRASVRRLFDADGGEIDQALVLWFPGPGSYTGEDAAEFHVHGGTAVTGALVEALAGLGLRLAEPGEFTRRAFENGKLDLAQAEGVADLIDSETEGQRRQALEQLGGRLSQVQARWREALTEALALFEAAVDFPDEEVPADVAARARPVLETLAAEIEAAAADAARGERVREGFRIALVGAPNAGKSTLLNALAGREAAIVTATPGTTRDVIEVPMVLAGYKVLMADTAGLRDTADEIEAEGVRRARAWAEGADLRLWLVDGSSEETPDLPAEIGEGDLCLITKRDLPVGNAGAWAAEVARRIGIPAAEVTARGPGDMAWLKETLSERVVESLGGGEPPAATRLRHRELLAEASERLRHAIGHDEHVELAAEDVRLAARALDRITGRIDPEAVLGRIFATFCIGK.

3 residues coordinate (6S)-5-formyl-5,6,7,8-tetrahydrofolate: Arg-21, Glu-78, and Lys-117. In terms of domain architecture, TrmE-type G spans 213–370 (GFRIALVGAP…LKETLSERVV (158 aa)). Residues 223-228 (NAGKST), 242-248 (TATPGTT), and 267-270 (DTAG) each bind GTP. Residues Ser-227 and Thr-248 each coordinate Mg(2+). Lys-445 lines the (6S)-5-formyl-5,6,7,8-tetrahydrofolate pocket.

Belongs to the TRAFAC class TrmE-Era-EngA-EngB-Septin-like GTPase superfamily. TrmE GTPase family. As to quaternary structure, homodimer. Heterotetramer of two MnmE and two MnmG subunits. Requires K(+) as cofactor.

It localises to the cytoplasm. Exhibits a very high intrinsic GTPase hydrolysis rate. Involved in the addition of a carboxymethylaminomethyl (cmnm) group at the wobble position (U34) of certain tRNAs, forming tRNA-cmnm(5)s(2)U34. The sequence is that of tRNA modification GTPase MnmE from Phenylobacterium zucineum (strain HLK1).